We begin with the raw amino-acid sequence, 232 residues long: Ubiquinone biosynthesis O-methyltransferase (232 aa).

S-adenosyl-L-methionine-binding residues include arginine 36, glycine 55, aspartate 76, and methionine 120.

This sequence belongs to the methyltransferase superfamily. UbiG/COQ3 family.

It catalyses the reaction a 3-demethylubiquinol + S-adenosyl-L-methionine = a ubiquinol + S-adenosyl-L-homocysteine + H(+). The enzyme catalyses a 3-(all-trans-polyprenyl)benzene-1,2-diol + S-adenosyl-L-methionine = a 2-methoxy-6-(all-trans-polyprenyl)phenol + S-adenosyl-L-homocysteine + H(+). It participates in cofactor biosynthesis; ubiquinone biosynthesis. Functionally, O-methyltransferase that catalyzes the 2 O-methylation steps in the ubiquinone biosynthetic pathway. The polypeptide is Ubiquinone biosynthesis O-methyltransferase (Paraburkholderia phymatum (strain DSM 17167 / CIP 108236 / LMG 21445 / STM815) (Burkholderia phymatum)).